We begin with the raw amino-acid sequence, 262 residues long: Acidic leucine-rich nuclear phosphoprotein 32 family member B (262 aa).

LRR repeat units lie at residues 16 to 40, 43 to 64, 65 to 87, and 89 to 110; these read PGEV…LSSD, NLEF…PKLN, KLRK…AERT, and NLTH…EPLK. Residues 123–161 enclose the LRRCT domain; that stretch reads CEVTMLINYRESVFTLLPQLTYLDGFDADEQEAPDSDPE. Acidic residues predominate over residues 150-233; it reads ADEQEAPDSD…EDEEDDEADD (84 aa). The tract at residues 150-262 is disordered; it reads ADEQEAPDSD…PEDEEDDEDD (113 aa). The Nuclear localization signal motif lies at 240–243; that stretch reads KRKR. Positions 247-262 are enriched in acidic residues; it reads DEGEEDPEDEEDDEDD.

Belongs to the ANP32 family. In terms of assembly, interacts with histones H3 and H4. Interacts with KLF5; this interaction induces promoter region-specific histone incorporation and inhibition of histone acetylation by ANP32B. In terms of processing, directly cleaved by caspase-3/CASP3.

The protein resides in the nucleus. In terms of biological role, multifunctional protein that is involved in the regulation of many processes including cell proliferation, apoptosis, cell cycle progression or transcription. Regulates the proliferation of neuronal stem cells, differentiation of leukemic cells and progression from G1 to S phase of the cell cycle. As negative regulator of caspase-3-dependent apoptosis, may act as an antagonist of ANP32A in regulating tissue homeostasis. Exhibits histone chaperone properties, able to recruit histones to certain promoters, thus regulating the transcription of specific genes. Also plays an essential role in the nucleocytoplasmic transport of specific mRNAs via the uncommon nuclear mRNA export receptor XPO1/CRM1. The protein is Acidic leucine-rich nuclear phosphoprotein 32 family member B (ANP32B) of Gallus gallus (Chicken).